We begin with the raw amino-acid sequence, 354 residues long: MYSKFWPKGGLPGILHHYTETLVTFEYTTTTTRKPHSLLFVGGLGDGLATTSYLADLAHALQPTEWSLFTLTLTSSYQSWGLGHLDRDTNEIAQCLKYIKEYKTEKFGGSASSGKIVLMGHSTGSQCVLHYLSRPNPHTHTPAFDPYLEHVERMPLDGAIMQAPVSDREAIQWVLAEGLGDRTPAEIRPVFEKLTSMAREAARDADAGTDVLLPLAMTSLVYPAHTPLSARRFLSLTSPESPESPSEDDLFSSDLSDEQLGKTFGMIREQGLLRGKLMVLFSGADQSVPAWVDKDTLLSRWRNATDHNGEAAIWDENSGIIPNASHALSNDDQAEPRNFLVNKVLGYLSALVKA.

The protein belongs to the sidJ hydrolase family. In terms of assembly, homodimer.

It carries out the reaction fusarinine C + 3 H2O = 3 fusarinine + Fe(3+). Its function is as follows. Displays specific fusarinine C (FsC) esterase activity but does not hydrolyze triacetylfusarinine C (TAFC), which has the same core structure as fusarinine C. Both extra- and intracellular siderophores have been shown to be crucial for the virulence. Subsequent to chelation of iron and uptake, FsC and TAFC are hydrolyzed and the iron is transferred to the metabolism or to the intracellular siderophore ferricrocin (FC) for transport and storage of iron. In Aspergillus fumigatus (strain ATCC MYA-4609 / CBS 101355 / FGSC A1100 / Af293) (Neosartorya fumigata), this protein is Fusarinine C esterase sidJ.